Consider the following 362-residue polypeptide: Cobalt-precorrin-5B C(1)-methyltransferase (362 aa).

It belongs to the CbiD family.

The enzyme catalyses Co-precorrin-5B + S-adenosyl-L-methionine = Co-precorrin-6A + S-adenosyl-L-homocysteine. Its pathway is cofactor biosynthesis; adenosylcobalamin biosynthesis; cob(II)yrinate a,c-diamide from sirohydrochlorin (anaerobic route): step 6/10. Its function is as follows. Catalyzes the methylation of C-1 in cobalt-precorrin-5B to form cobalt-precorrin-6A. This Burkholderia vietnamiensis (strain G4 / LMG 22486) (Burkholderia cepacia (strain R1808)) protein is Cobalt-precorrin-5B C(1)-methyltransferase.